A 235-amino-acid polypeptide reads, in one-letter code: ATP synthase subunit a (235 aa).

A run of 5 helical transmembrane segments spans residues 17 to 37 (TTNI…LYGM), 76 to 96 (SFFA…GLIF), 113 to 133 (PVVT…AGVA), 179 to 201 (LLMS…PGLF), and 211 to 230 (VFIG…VYIS).

Belongs to the ATPase A chain family. In terms of assembly, F-type ATPases have 2 components, CF(1) - the catalytic core - and CF(0) - the membrane proton channel. CF(1) has five subunits: alpha(3), beta(3), gamma(1), delta(1), epsilon(1). CF(0) has three main subunits: a(1), b(2) and c(9-12). The alpha and beta chains form an alternating ring which encloses part of the gamma chain. CF(1) is attached to CF(0) by a central stalk formed by the gamma and epsilon chains, while a peripheral stalk is formed by the delta and b chains.

It is found in the cell membrane. In terms of biological role, key component of the proton channel; it plays a direct role in the translocation of protons across the membrane. This chain is ATP synthase subunit a, found in Limosilactobacillus reuteri subsp. reuteri (strain JCM 1112) (Lactobacillus reuteri).